The chain runs to 464 residues: tRNA modification GTPase MnmE (464 aa).

3 residues coordinate (6S)-5-formyl-5,6,7,8-tetrahydrofolate: arginine 25, glutamate 87, and lysine 130. One can recognise a TrmE-type G domain in the interval 226–386 (GLSVVLAGQP…LRAELLRIAG (161 aa)). Asparagine 236 contributes to the K(+) binding site. Residues 236–241 (NVGKSS), 255–261 (TPIAGTT), and 280–283 (DTAG) contribute to the GTP site. A Mg(2+)-binding site is contributed by serine 240. The K(+) site is built by threonine 255, isoleucine 257, and threonine 260. Threonine 261 is a Mg(2+) binding site. Lysine 464 contacts (6S)-5-formyl-5,6,7,8-tetrahydrofolate.

The protein belongs to the TRAFAC class TrmE-Era-EngA-EngB-Septin-like GTPase superfamily. TrmE GTPase family. Homodimer. Heterotetramer of two MnmE and two MnmG subunits. K(+) is required as a cofactor.

It localises to the cytoplasm. In terms of biological role, exhibits a very high intrinsic GTPase hydrolysis rate. Involved in the addition of a carboxymethylaminomethyl (cmnm) group at the wobble position (U34) of certain tRNAs, forming tRNA-cmnm(5)s(2)U34. The chain is tRNA modification GTPase MnmE from Burkholderia orbicola (strain AU 1054).